The sequence spans 320 residues: Cytochrome f (320 aa).

Positions Met-1–Ala-35 are cleaved as a signal peptide. Residues Tyr-36, Cys-56, Cys-59, and His-60 each contribute to the heme site. A helical transmembrane segment spans residues Val-286–Lys-306.

The protein belongs to the cytochrome f family. The 4 large subunits of the cytochrome b6-f complex are cytochrome b6, subunit IV (17 kDa polypeptide, petD), cytochrome f and the Rieske protein, while the 4 small subunits are PetG, PetL, PetM and PetN. The complex functions as a dimer. It depends on heme as a cofactor.

The protein resides in the plastid. It localises to the chloroplast thylakoid membrane. Its function is as follows. Component of the cytochrome b6-f complex, which mediates electron transfer between photosystem II (PSII) and photosystem I (PSI), cyclic electron flow around PSI, and state transitions. The protein is Cytochrome f of Carica papaya (Papaya).